The primary structure comprises 406 residues: 4-hydroxy-3-methylbut-2-en-1-yl diphosphate synthase (flavodoxin) (406 aa).

Residues Cys297, Cys300, Cys343, and Glu350 each coordinate [4Fe-4S] cluster.

It belongs to the IspG family. The cofactor is [4Fe-4S] cluster.

It carries out the reaction (2E)-4-hydroxy-3-methylbut-2-enyl diphosphate + oxidized [flavodoxin] + H2O + 2 H(+) = 2-C-methyl-D-erythritol 2,4-cyclic diphosphate + reduced [flavodoxin]. It functions in the pathway isoprenoid biosynthesis; isopentenyl diphosphate biosynthesis via DXP pathway; isopentenyl diphosphate from 1-deoxy-D-xylulose 5-phosphate: step 5/6. In terms of biological role, converts 2C-methyl-D-erythritol 2,4-cyclodiphosphate (ME-2,4cPP) into 1-hydroxy-2-methyl-2-(E)-butenyl 4-diphosphate. This chain is 4-hydroxy-3-methylbut-2-en-1-yl diphosphate synthase (flavodoxin), found in Thermus thermophilus (strain ATCC 27634 / DSM 579 / HB8).